We begin with the raw amino-acid sequence, 198 residues long: Fimbriae W protein (198 aa).

One can recognise an HTH luxR-type domain in the interval 127 to 192 (HYCTTRHFSV…QFLKYIRVNL (66 aa)).

Its subcellular location is the fimbrium. This Salmonella typhimurium (strain LT2 / SGSC1412 / ATCC 700720) protein is Fimbriae W protein (fimW).